A 250-amino-acid polypeptide reads, in one-letter code: 1-(5-phosphoribosyl)-5-[(5-phosphoribosylamino)methylideneamino] imidazole-4-carboxamide isomerase (250 aa).

Asp7 serves as the catalytic Proton acceptor. Asp129 acts as the Proton donor in catalysis.

The protein belongs to the HisA/HisF family.

It localises to the cytoplasm. It carries out the reaction 1-(5-phospho-beta-D-ribosyl)-5-[(5-phospho-beta-D-ribosylamino)methylideneamino]imidazole-4-carboxamide = 5-[(5-phospho-1-deoxy-D-ribulos-1-ylimino)methylamino]-1-(5-phospho-beta-D-ribosyl)imidazole-4-carboxamide. It participates in amino-acid biosynthesis; L-histidine biosynthesis; L-histidine from 5-phospho-alpha-D-ribose 1-diphosphate: step 4/9. The sequence is that of 1-(5-phosphoribosyl)-5-[(5-phosphoribosylamino)methylideneamino] imidazole-4-carboxamide isomerase from Shewanella denitrificans (strain OS217 / ATCC BAA-1090 / DSM 15013).